Reading from the N-terminus, the 123-residue chain is MALTPLLLLLLSHCTGSLSRPVLTQPPSLSASPGATARLPCTLSSDLSVGGKNMFWYQQKLGSSPRLFLYHYSDSDKQLGPGVPSRVSGSKETSSNTAFLLISGLQPEDEADYYCQVYESSAN.

Positions M1–S19 are cleaved as a signal peptide. The segment at R20–S44 is framework-1. Residues P21–N123 enclose the Ig-like domain. A disulfide bond links C41 and C115. The interval S45–N53 is complementarity-determining-1. The tract at residues M54 to Y70 is framework-2. The tract at residues H71–K77 is complementarity-determining-2. Residues Q78–C115 are framework-3. The interval Q116–N123 is complementarity-determining-3.

In terms of assembly, immunoglobulins are composed of two identical heavy chains and two identical light chains; disulfide-linked.

Its subcellular location is the secreted. It is found in the cell membrane. Its function is as follows. Probable non-functional open reading frame (ORF) of V region of the variable domain of immunoglobulin light chains. Non-functional ORF generally cannot participate in the synthesis of a productive immunoglobulin chain due to altered V-(D)-J or switch recombination and/or splicing site (at mRNA level) and/or conserved amino acid change (protein level). Immunoglobulins, also known as antibodies, are membrane-bound or secreted glycoproteins produced by B lymphocytes. In the recognition phase of humoral immunity, the membrane-bound immunoglobulins serve as receptors which, upon binding of a specific antigen, trigger the clonal expansion and differentiation of B lymphocytes into immunoglobulins-secreting plasma cells. Secreted immunoglobulins mediate the effector phase of humoral immunity, which results in the elimination of bound antigens. The antigen binding site is formed by the variable domain of one heavy chain, together with that of its associated light chain. Thus, each immunoglobulin has two antigen binding sites with remarkable affinity for a particular antigen. The variable domains are assembled by a process called V-(D)-J rearrangement and can then be subjected to somatic hypermutations which, after exposure to antigen and selection, allow affinity maturation for a particular antigen. The protein is Probable non-functional immunoglobulin lambda variable 11-55 of Homo sapiens (Human).